The sequence spans 122 residues: Phospholipase A2 crotoxin basic subunit CBd (122 aa).

7 cysteine pairs are disulfide-bonded: Cys26–Cys115, Cys28–Cys44, Cys43–Cys95, Cys49–Cys122, Cys50–Cys88, Cys57–Cys81, and Cys75–Cys86. The Ca(2+) site is built by Tyr27, Gly29, and Gly31. The active site involves His47. Asp48 is a Ca(2+) binding site. The active site involves Asp89.

It belongs to the phospholipase A2 family. Group II subfamily. D49 sub-subfamily. As to quaternary structure, heterodimer of one of the acidic (CA1, CA2, CA3 or CA4) and one of the basic (CBa1, CBa2, CBb, CBc or CBd) subunits; non-covalently linked. The acidic subunit is non-toxic, without enzymatic activity and comprises 3 peptides that are cross-linked by 5 disulfide bridges. The basic subunit is toxic, has phospholipase A2 activity and is composed of a single chain. Multiple variants of each subunit give different crotoxin complexes that can be subdivided into 2 classes: (1) those of high toxicity, low PLA2 activity (CBb, CBc and CBd linked with high affinity to any CA) and high stability (K(d)=4.5 nM) and (2) those of moderate toxicity, high PLA2 activity (CBa2 linked with low affinity to any CA) and low stability (K(d)=25 nM). Interacts with crotoxin inhibitor from Crotalus serum (CICS); the interaction leads to dissociation of the CA-CB heterodimer and to inhibition of PLA2 activity of the CB subunit. Interacts with human NBD1 domain of CFTR. It depends on Ca(2+) as a cofactor. As to expression, expressed by the venom gland.

It localises to the secreted. The catalysed reaction is a 1,2-diacyl-sn-glycero-3-phosphocholine + H2O = a 1-acyl-sn-glycero-3-phosphocholine + a fatty acid + H(+). Heterodimer CA-CB: Crotoxin is a potent presynaptic neurotoxin that possesses phospholipase A2 (PLA2) activity and exerts a lethal action by blocking neuromuscular transmission. It consists of a non-covalent association of a basic and weakly toxic PLA2 subunit (CBa2, CBb, CBc, or CBd), with a small acidic, non-enzymatic and non-toxic subunit (CA1, CA2, CA3 or CA4). The complex acts by binding to a specific 48-kDa protein (R48) receptor located on presynaptic membranes, forming a transient ternary complex CA-CB-R48, followed by dissociation of the CA-CB complex and release of the CA subunit. At equilibrium, only the CB subunits remain associated with the specific crotoxin receptor. In addition to neurotoxicity, crotoxin has been found to exert myotoxicity, nephrotoxicity, and cardiovascular toxicity. Moreover, anti-inflammatory, immunomodulatory, anti-tumor and analgesic effects of crotoxin have also been reported. Its function is as follows. Monomer CBd: The basic subunit of crotoxin is a snake venom phospholipase A2 (PLA2) that exhibits weak neurotoxicity (10-fold less than the heterodimer) and very strong anticoagulant effects by binding to factor Xa (F10) and inhibiting the prothrombinase activity. In addition, it shows the same effects described for the heterodimer and binds the nucleotide-binding domain (NBD1) of CFTR chloride channels and increases the channel current. PLA2 catalyzes the calcium-dependent hydrolysis of the 2-acyl groups in 3-sn-phosphoglycerides. This Crotalus durissus terrificus (South American rattlesnake) protein is Phospholipase A2 crotoxin basic subunit CBd.